Reading from the N-terminus, the 410-residue chain is Chitin deacetylase 3 (410 aa).

The signal sequence occupies residues 1–18 (MYGHLSLSTLSLLAVVAA). Residues 19–39 (APFPESWLQPRDSDVSQLFRR) constitute a propeptide that is removed on maturation. Asn61 and Asn80 each carry an N-linked (GlcNAc...) asparagine glycan. Residues 124 to 314 (KVWALSFDDG…KAVANGWSVK (191 aa)) form the NodB homology domain. The Proton acceptor role is filled by Asp131. Residue Asp131 participates in acetate binding. Residue Asp132 coordinates Co(2+). Asn149 carries an N-linked (GlcNAc...) asparagine glycan. Residues His183 and His187 each coordinate Co(2+). Tyr225 serves as a coordination point for acetate. Asn279 carries an N-linked (GlcNAc...) asparagine glycan. The active-site Proton donor is His289. Asn293 carries N-linked (GlcNAc...) asparagine glycosylation. Ser385 carries GPI-anchor amidated serine lipidation. Positions 386–410 (SSWPIANRPSLFVIACGLALAAIMV) are cleaved as a propeptide — removed in mature form.

It belongs to the polysaccharide deacetylase family. Co(2+) is required as a cofactor.

It is found in the cell membrane. The catalysed reaction is [(1-&gt;4)-N-acetyl-beta-D-glucosaminyl](n) + n H2O = chitosan + n acetate. Hydrolyzes the N-acetamido groups of N-acetyl-D-glucosamine residues in chitin to form chitosan and acetate. Chitosan is required to anchor melanin to the cell wall, for maintenance of cell wall integrity, and for proper cytokinesis. Chitosan offers an advantage during infection as it is less readily detected than chitin by host immunosurveillance mechanisms. This is Chitin deacetylase 3 from Cryptococcus neoformans var. neoformans serotype D (strain JEC21 / ATCC MYA-565) (Filobasidiella neoformans).